A 353-amino-acid chain; its full sequence is Melanin-concentrating hormone receptor 1 (353 aa).

The interval 1-28 is disordered; that stretch reads MDLEASLLPTGPNASNTSDGPDNLTSAG. At 1 to 45 the chain is on the extracellular side; the sequence is MDLEASLLPTGPNASNTSDGPDNLTSAGPPPRTGSISYVNIIMPS. A compositionally biased stretch (polar residues) spans 12-26; that stretch reads PNASNTSDGPDNLTS. N-linked (GlcNAc...) asparagine glycans are attached at residues N13, N16, and N23. The chain crosses the membrane as a helical span at residues 46-66; that stretch reads VFGTICLLGIIGNSMVIFAVV. Over 67–79 the chain is Cytoplasmic; it reads KKSKLHWFSNVPD. Residues 80 to 100 form a helical membrane-spanning segment; that stretch reads IFIINLSVVDLLFLLGMPFMI. The Extracellular segment spans residues 101–116; that stretch reads HQLMGNGVWHFGETMC. The cysteines at positions 116 and 194 are disulfide-linked. The helical transmembrane segment at 117–139 threads the bilayer; that stretch reads TLITAMDANSQFTSTYILTAMAI. Residues 140 to 161 lie on the Cytoplasmic side of the membrane; that stretch reads DRYLATVHPISSTRFRKPSVAT. Residues 162-182 form a helical membrane-spanning segment; that stretch reads LVICLLWALSIISITPVWLYA. Residues 183–204 lie on the Extracellular side of the membrane; the sequence is RLIPFPGGTVGCGIRLPNPDTD. Residues 205–225 traverse the membrane as a helical segment; the sequence is LYWFTLYQFFLAFALPFVVIT. Topologically, residues 226 to 256 are cytoplasmic; it reads AAYVRILQRMTSSVAPASQRSIRLRTKRVTR. The chain crosses the membrane as a helical span at residues 257–277; it reads TAIAICLVFFVCWAPYYVLQL. The Extracellular portion of the chain corresponds to 278–294; it reads TQLSISRPTLTFVYLYN. A helical transmembrane segment spans residues 295–315; that stretch reads AAISLGYANSCLNPFVYIVLC. Topologically, residues 316–353 are cytoplasmic; sequence ETFRKRLVLSVKPAAQGQLRAVSNAQTAEEERTESKGT.

Belongs to the G-protein coupled receptor 1 family. As to quaternary structure, interacts with NCDN.

Its subcellular location is the cell membrane. In terms of biological role, receptor for melanin-concentrating hormone, coupled to both G proteins that inhibit adenylyl cyclase and G proteins that activate phosphoinositide hydrolysis. The protein is Melanin-concentrating hormone receptor 1 of Sus scrofa (Pig).